A 378-amino-acid chain; its full sequence is Geraniol dehydrogenase (378 aa).

C48, H75, C105, C108, C111, C119, and C179 together coordinate Zn(2+).

It belongs to the zinc-containing alcohol dehydrogenase family. Monomer. Zn(2+) is required as a cofactor.

It carries out the reaction (2E)-geraniol + NAD(+) = (2E)-geranial + NADH + H(+). The catalysed reaction is (2E,6E)-farnesol + NAD(+) = (2E,6E)-farnesal + NADH + H(+). Functionally, catalyzes the NAD(+)-dependent oxidation of geraniol to geranial, playing an important role in the biosynthesis of neral, an alarm pheromone. Cannot use NADP(+). Also acts as a farnesol dehydrogenase by catalyzing the oxidation of (2E,6E)-farnesol to (2E,6E)-farnesal, with lower activity compared to geraniol dehydrogenase activity. This is Geraniol dehydrogenase from Carpoglyphus lactis (Dried fruit mite).